The primary structure comprises 89 residues: MALEKEEKSQIINGYQIHETDTGSPEVQVALLTERINQLIEHLRVHTHDHHSRRGLLKLVGRRRRLLNYLQSKDRERYRNVINRLGLRR.

The protein belongs to the universal ribosomal protein uS15 family. As to quaternary structure, part of the 30S ribosomal subunit. Forms a bridge to the 50S subunit in the 70S ribosome, contacting the 23S rRNA.

One of the primary rRNA binding proteins, it binds directly to 16S rRNA where it helps nucleate assembly of the platform of the 30S subunit by binding and bridging several RNA helices of the 16S rRNA. Functionally, forms an intersubunit bridge (bridge B4) with the 23S rRNA of the 50S subunit in the ribosome. This chain is Small ribosomal subunit protein uS15, found in Chloroflexus aurantiacus (strain ATCC 29366 / DSM 635 / J-10-fl).